The primary structure comprises 1174 residues: DNA-directed RNA polymerase subunit beta' (1174 aa).

Zn(2+)-binding residues include Cys-60, Cys-62, Cys-75, and Cys-78. The Mg(2+) site is built by Asp-450, Asp-452, and Asp-454. Zn(2+)-binding residues include Cys-795, Cys-869, Cys-876, and Cys-879.

It belongs to the RNA polymerase beta' chain family. In terms of assembly, the RNAP catalytic core consists of 2 alpha, 1 beta, 1 beta' and 1 omega subunit. When a sigma factor is associated with the core the holoenzyme is formed, which can initiate transcription. Mg(2+) serves as cofactor. Requires Zn(2+) as cofactor.

The catalysed reaction is RNA(n) + a ribonucleoside 5'-triphosphate = RNA(n+1) + diphosphate. Functionally, DNA-dependent RNA polymerase catalyzes the transcription of DNA into RNA using the four ribonucleoside triphosphates as substrates. This chain is DNA-directed RNA polymerase subunit beta', found in Clostridium kluyveri (strain ATCC 8527 / DSM 555 / NBRC 12016 / NCIMB 10680 / K1).